The primary structure comprises 745 residues: Protein transport protein SEC23 D (745 aa).

Zn(2+) contacts are provided by Cys53, Cys56, Cys73, and Cys76. Residues 53-76 (CENCYAYFNTYCELDQWAWNCSLC) are zinc finger-like.

This sequence belongs to the SEC23/SEC24 family. SEC24 subfamily. In terms of assembly, component of the coat protein complex II (COPII), composed of at least five proteins: the Sec23/24 complex, the Sec13/31 complex and Sar1. Mostly expressed in closed floral bud, pollen and flowers, and, to a lower extent, in mature siliques, roots and leaf primordia.

It is found in the cytoplasmic vesicle. It localises to the COPII-coated vesicle membrane. The protein localises to the endoplasmic reticulum membrane. Its subcellular location is the membrane. In terms of biological role, component of the coat protein complex II (COPII) which promotes the formation of transport vesicles from the endoplasmic reticulum (ER). The coat has two main functions, the physical deformation of the endoplasmic reticulum membrane into vesicles and the selection of cargo molecules. May contribute to COPII-coated vesicles formation and ER-Golgi vesicle transport. Together with SEC23A, essential for pollen wall development and exine patterning, probably by regulating endoplasmic reticulum (ER) export of lipids and proteins (e.g. sporopollenin) necessary for pollen wall formation. Also involved in plastid physiology in anther tapetal cells. In Arabidopsis thaliana (Mouse-ear cress), this protein is Protein transport protein SEC23 D.